The following is a 288-amino-acid chain: Serine/threonine-protein phosphatase PGAM5, mitochondrial (288 aa).

Over 1–6 the chain is Mitochondrial matrix; it reads MAFRQA. Residues 7 to 29 form a helical membrane-spanning segment; the sequence is LQLAACGLAGGSAAVLFSAVAVG. Over 30 to 288 the chain is Mitochondrial intermembrane; sequence KPRGGGDADT…FMPPDKITRS (259 aa). The tract at residues 76–81 is interaction with KEAP1; that stretch reads NVESGE. 2 positions are modified to phosphoserine: Ser-79 and Ser-86. An N6-acetyllysine mark is found at Lys-115, Lys-143, and Lys-190.

The protein belongs to the phosphoglycerate mutase family. BPG-dependent PGAM subfamily. As to quaternary structure, dimer. Forms a ternary complex with NFE2L2 and KEAP1. Interacts with BCL2L1 and MAP3K5. Upon TNF-induced necrosis, forms in complex with RIPK1, RIPK3 and MLKL; the formation of this complex leads to PGAM5 phosphorylation. Isoform 2, but not isoform 1, interacts with DNM1L; this interaction leads to DNM1L dephosphorylation and activation and eventually to mitochondria fragmentation. Post-translationally, phosphorylated by the RIPK1/RIPK3 complex under necrotic conditions. This phosphorylation increases PGAM5 phosphatase activity. In terms of processing, proteolytically cleaved by PARL in response to loss of mitochondrial membrane potential.

The protein localises to the mitochondrion outer membrane. Its subcellular location is the mitochondrion inner membrane. It carries out the reaction O-phospho-L-seryl-[protein] + H2O = L-seryl-[protein] + phosphate. The enzyme catalyses O-phospho-L-threonyl-[protein] + H2O = L-threonyl-[protein] + phosphate. Mitochondrial serine/threonine phosphatase that dephosphorylates various substrates and thus plays a role in different biological processes including cellular senescence or mitophagy. Modulates cellular senescence by regulating mitochondrial dynamics. Mechanistically, participates in mitochondrial fission through dephosphorylating DNM1L/DRP1. Additionally, dephosphorylates MFN2 in a stress-sensitive manner and consequently protects it from ubiquitination and degradation to promote mitochondrial network formation. Regulates mitophagy independent of PARKIN by interacting with and dephosphorylating FUNDC1, which interacts with LC3. Regulates anti-oxidative response by forming a tertiary complex with KEAP1 and NRF2. Regulates necroptosis by acting as a RIPK3 target and recruiting the RIPK1-RIPK3-MLKL necrosis 'attack' complex to mitochondria. The sequence is that of Serine/threonine-protein phosphatase PGAM5, mitochondrial (Pgam5) from Mus musculus (Mouse).